We begin with the raw amino-acid sequence, 440 residues long: Chromosome partition protein MukF (440 aa).

The leucine-zipper stretch occupies residues 208 to 236; that stretch reads LSETSGTLRELQDTLEAAGDKLQANLLRI.

It belongs to the MukF family. In terms of assembly, interacts, and probably forms a ternary complex, with MukE and MukB via its C-terminal region. The complex formation is stimulated by calcium or magnesium. It is required for an interaction between MukE and MukB.

It localises to the cytoplasm. The protein localises to the nucleoid. Involved in chromosome condensation, segregation and cell cycle progression. May participate in facilitating chromosome segregation by condensation DNA from both sides of a centrally located replisome during cell division. Not required for mini-F plasmid partitioning. Probably acts via its interaction with MukB and MukE. Overexpression results in anucleate cells. It has a calcium binding activity. This is Chromosome partition protein MukF from Yersinia pestis.